Here is a 325-residue protein sequence, read N- to C-terminus: Release factor glutamine methyltransferase (325 aa).

S-adenosyl-L-methionine is bound by residues 141 to 145 (GTGSG), Asp164, Trp193, and Asn207. 207–210 (NPPY) provides a ligand contact to substrate. A disordered region spans residues 306–325 (LPPIHIDAKPSAPGNGPTKA).

Belongs to the protein N5-glutamine methyltransferase family. PrmC subfamily.

The catalysed reaction is L-glutaminyl-[peptide chain release factor] + S-adenosyl-L-methionine = N(5)-methyl-L-glutaminyl-[peptide chain release factor] + S-adenosyl-L-homocysteine + H(+). In terms of biological role, methylates the class 1 translation termination release factors RF1/PrfA and RF2/PrfB on the glutamine residue of the universally conserved GGQ motif. This chain is Release factor glutamine methyltransferase, found in Rhodospirillum rubrum (strain ATCC 11170 / ATH 1.1.1 / DSM 467 / LMG 4362 / NCIMB 8255 / S1).